Consider the following 144-residue polypeptide: Transcriptional regulator MraZ (144 aa).

2 SpoVT-AbrB domains span residues 5–47 and 77–120; these read TYTP…PRAE and TDEQ…DAQA.

It belongs to the MraZ family. In terms of assembly, forms oligomers.

It localises to the cytoplasm. Its subcellular location is the nucleoid. This is Transcriptional regulator MraZ from Mycolicibacterium gilvum (strain PYR-GCK) (Mycobacterium gilvum (strain PYR-GCK)).